A 458-amino-acid chain; its full sequence is Oxysterol-binding protein-related protein 3B (458 aa).

Disordered stretches follow at residues 47 to 66 (VINP…RGRW), 370 to 401 (DMSK…AFTP), and 431 to 458 (RAAA…DLST). Basic and acidic residues predominate over residues 375 to 396 (GYEKSSMEERQRAEKRTREEKG). A compositionally biased stretch (polar residues) spans 443 to 458 (PKSIQFNPWQFQDLST).

It belongs to the OSBP family. In terms of tissue distribution, expressed in roots, leaves, stems and flowers.

In terms of biological role, may be involved in the transport of sterols. The protein is Oxysterol-binding protein-related protein 3B (ORP3B) of Arabidopsis thaliana (Mouse-ear cress).